A 318-amino-acid polypeptide reads, in one-letter code: Epithelial-stromal interaction protein 1 (318 aa).

Residues 1 to 60 (MNTRNRVVNSGLGASPASRPTRDPQDPSGRQGELSPVEDQREGLEAAPKGPSRESVVHAG) form a disordered region. Coiled coils occupy residues 73–188 (NINR…HQQY) and 240–280 (LKAE…HQTE).

In terms of tissue distribution, highly expressed in placenta, small intestine, spleen, kidney, thymus, liver, salivary gland and testes. Weakly expressed in breast, skeletal muscle and colon. Highly expressed in breast cancer upon interaction between tumor cells and stromal cells in vitro. Expressed in blood mononuclear cells from patients with systemic lupus erythematosus (SLE).

Its function is as follows. Plays a role in M1 macrophage polarization and is required for the proper regulation of gene expression during M1 versus M2 macrophage differentiation. Might play a role in RELA/p65 and STAT1 phosphorylation and nuclear localization upon activation of macrophages. This Homo sapiens (Human) protein is Epithelial-stromal interaction protein 1 (EPSTI1).